We begin with the raw amino-acid sequence, 231 residues long: 7-cyano-7-deazaguanine synthase (231 aa).

8 to 18 (FSGGQDSTTCL) provides a ligand contact to ATP. Residues Cys188, Cys197, Cys200, and Cys203 each coordinate Zn(2+).

Belongs to the QueC family. It depends on Zn(2+) as a cofactor.

It catalyses the reaction 7-carboxy-7-deazaguanine + NH4(+) + ATP = 7-cyano-7-deazaguanine + ADP + phosphate + H2O + H(+). The protein operates within purine metabolism; 7-cyano-7-deazaguanine biosynthesis. Functionally, catalyzes the ATP-dependent conversion of 7-carboxy-7-deazaguanine (CDG) to 7-cyano-7-deazaguanine (preQ(0)). In Escherichia coli O127:H6 (strain E2348/69 / EPEC), this protein is 7-cyano-7-deazaguanine synthase.